The sequence spans 198 residues: Transcription factor IND (198 aa).

Residues methionine 1–proline 33 are disordered. In terms of domain architecture, bHLH spans isoleucine 118 to leucine 167.

In terms of assembly, homodimer. Heterodimer; possibly with ALC. As to expression, after fertilization, it is expressed in stripes about four cells wide at the margins of developing wild-type fruit. Also expressed in the inner valve layer, which becomes lignified later in fruit development. Detected in roots.

It is found in the nucleus. Functionally, transcription regulator required for seed dispersal. Involved in the differentiation of all three cell types required for fruit dehiscence. Acts as the key regulator in a network including SHP and ALC that controls specification of the valve margin. Works with ALC, SHP, and FUL to allow differentiation of the lignified valve layer, the spring-loaded mechanism of fruit that promotes opening. Regulates the expression of the YJ80 marker. In Arabidopsis thaliana (Mouse-ear cress), this protein is Transcription factor IND (IND).